The chain runs to 500 residues: Glycerol kinase (500 aa).

An ADP-binding site is contributed by Thr13. ATP is bound by residues Thr13, Thr14, and Ser15. Sn-glycerol 3-phosphate is bound at residue Thr13. Position 17 (Arg17) interacts with ADP. Sn-glycerol 3-phosphate-binding residues include Arg83, Glu84, Tyr135, and Asp244. The glycerol site is built by Arg83, Glu84, Tyr135, Asp244, and Gln245. 2 residues coordinate ADP: Thr266 and Gly309. ATP contacts are provided by Thr266, Gly309, Gln313, and Gly410. ADP contacts are provided by Gly410 and Asn414.

The protein belongs to the FGGY kinase family.

It carries out the reaction glycerol + ATP = sn-glycerol 3-phosphate + ADP + H(+). Its pathway is polyol metabolism; glycerol degradation via glycerol kinase pathway; sn-glycerol 3-phosphate from glycerol: step 1/1. With respect to regulation, inhibited by fructose 1,6-bisphosphate (FBP). In terms of biological role, key enzyme in the regulation of glycerol uptake and metabolism. Catalyzes the phosphorylation of glycerol to yield sn-glycerol 3-phosphate. This Burkholderia vietnamiensis (strain G4 / LMG 22486) (Burkholderia cepacia (strain R1808)) protein is Glycerol kinase.